The chain runs to 406 residues: Putative colanic acid biosynthesis glycosyltransferase WcaL (406 aa).

The protein belongs to the glycosyltransferase group 1 family. Glycosyltransferase 4 subfamily.

Its pathway is slime biogenesis; slime polysaccharide biosynthesis. The protein is Putative colanic acid biosynthesis glycosyltransferase WcaL (wcaL) of Escherichia coli (strain K12).